A 238-amino-acid polypeptide reads, in one-letter code: NAD-dependent protein deacylase (238 aa).

Residues 1 to 237 (MRGIMKVFVL…PAWVERLLAR (237 aa)) form the Deacetylase sirtuin-type domain. 12 to 31 (GAGVSAESGLGTFRDKDGVW) provides a ligand contact to NAD(+). Y56 and R59 together coordinate substrate. Position 94 to 97 (94 to 97 (QNVD)) interacts with NAD(+). The Proton acceptor role is filled by H112. The Zn(2+) site is built by C120, C123, C139, and C142. NAD(+)-binding positions include 179 to 181 (GTS), 205 to 207 (NLE), and A223.

The protein belongs to the sirtuin family. Class III subfamily. The cofactor is Zn(2+).

The protein localises to the cytoplasm. It carries out the reaction N(6)-acetyl-L-lysyl-[protein] + NAD(+) + H2O = 2''-O-acetyl-ADP-D-ribose + nicotinamide + L-lysyl-[protein]. The enzyme catalyses N(6)-succinyl-L-lysyl-[protein] + NAD(+) + H2O = 2''-O-succinyl-ADP-D-ribose + nicotinamide + L-lysyl-[protein]. Its function is as follows. NAD-dependent lysine deacetylase and desuccinylase that specifically removes acetyl and succinyl groups on target proteins. Modulates the activities of several proteins which are inactive in their acylated form. This Caulobacter vibrioides (strain ATCC 19089 / CIP 103742 / CB 15) (Caulobacter crescentus) protein is NAD-dependent protein deacylase.